Reading from the N-terminus, the 850-residue chain is Coiled-coil and C2 domain-containing protein 1B (850 aa).

Residues 1-10 (MPGPRPRKGP) show a composition bias toward basic residues. Disordered regions lie at residues 1-21 (MPGPRPRKGPKTSGQGAETAK), 54-73 (LTGETGSTSRKPAPKGRAPL), and 114-145 (GVDEETGLVDDSEETSPDLSEEKTRDNTEQPV). A compositionally biased stretch (acidic residues) spans 114–129 (GVDEETGLVDDSEETS). Residues 167-213 (LQALLEERIQNYREAAASAKEAGEAAKARRCERGLKTLESQLATVRK) are a coiled coil. Disordered regions lie at residues 215 to 277 (GKIC…SDPD) and 436 to 525 (FAEL…SPSV). Over residues 234–244 (AHQERPSKDSE) the composition is skewed to basic and acidic residues. The segment covering 440-450 (PVPPGFPPIPG) has biased composition (pro residues). Composition is skewed to low complexity over residues 489-502 (PAQAPLAKKPAQPL) and 511-524 (EPKASSSKESLSPS). Position 585 is a phosphoserine (Ser585). At Thr588 the chain carries Phosphothreonine. In terms of domain architecture, C2 spans 668–807 (DPPSHHFELK…EKECEIREIM (140 aa)).

Interacts with CHMP4B. In terms of tissue distribution, expressed in epididymal sperm but not in testicular sperm (at protein level).

The protein localises to the nucleus. Functionally, transcription factor that binds specifically to the DRE (dual repressor element) and represses HTR1A gene transcription in neuronal cells. The sequence is that of Coiled-coil and C2 domain-containing protein 1B (Cc2d1b) from Rattus norvegicus (Rat).